The sequence spans 1052 residues: MDTFRKWLNKPKADDKSLLARFYHADRSLTAVASELDSFDGRAEPDRCTRLVSRLRQNQDKVLAITNLIMEELLGEERDPRAFRAKFPEEVLQENLAGQLWFGAECLAAGSSILNRESESKEMRPLAQAVTKSLSNVRVLLRDQCLRNNVPNSKTLHLDFNDSTTEQLYESLKIFDHLFAEFELSYVSAMVQVKSRHEYEMQQWIGVLFSETLQRALKIGLLDQDMVDAFDPGLMFSIPRLAIVAGLVIYAKGPLNMDMPGDELSEMFRPFRTILIKIRDLLRNLSKQELYQLEKLLCTNEEINTKVPLGYSSIEAPSPEPNSSNNHNNNNSNSSDSGSAKTSTTSPHKAVERLVDHRNNNNSSSCSASAATQAVARSPSMLSLSAGSTPTASPAPSPTPSHSIASTSSAATTSTNPPANWSEDDDDDDEEREDDEEECGMLDSDEQDLNDDSDSDVDEYIEAQLKAIVAAADCASGYLIPNTNLGNLLQPQTAPLTDNFVASEDDEFGAEQEQEQQQRQREEQLQPSSEQQEEPSTSAAMLAARRTLQRLRLPSSSSENEQTTGSNQQSTIKTPNGGGQPMRSGSQRQRHHSHHHHHRHHHHHHHHRQHHHQQQHQPAQAEQHSHHHHHQTHPHRTSRSARKRCSQEHWESTTAEQQQTIDHGHGLASADTSNASSFSDDVSLAMRNTTARLKFKSTENLLHRLFVCIAGVADQLQTNFASDLRQILRSVFLINMSSSQEDIDIPEKTKESELFEFRASENDVIQESAGSNQSIYSAEEVNPELDNVFNMGNGNGGGTNAARHSAGAAMQRNNTIDLSGGGYNNNNNNNNNSGSSSSSNSSTVARSHVARSRSLGDQEAATSGTLQEEQRQQQQQQQAQLQLQMQRQRNNSVGSNSPSSSSSSSSSSEHNSPISTRSGSRRRLHSNSASMPSIGSTATTAAATAAATATTTTSATTTTTTTTMSPPAWIPDGKAPRCMSCQTPFTAFRRRHHCRNCGGVFCGVCSNASAPLPKYGLTKAVRVCRECYVREVRSSRTQAHSQASRPQAASAS.

5 disordered regions span residues Y311–H348, P379–S455, D506–A539, L551–F678, and N814–G973. 3 stretches are compositionally biased toward low complexity: residues S312–S346, P379–A392, and P400–A419. A compositionally biased stretch (acidic residues) spans S422–S455. Positions P554–T574 are enriched in polar residues. Phosphoserine occurs at positions 555 and 556. Basic residues-rich tracts occupy residues R588–Q614 and S625–R644. Residues S652–I661 are compositionally biased toward polar residues. Residues N824 to S842 show a composition bias toward low complexity. S854 carries the phosphoserine modification. Low complexity predominate over residues Q872–S915. Over residues S926–G935 the composition is skewed to polar residues. Over residues S936 to T963 the composition is skewed to low complexity. The FYVE-type zinc finger occupies D972–V1032. Zn(2+) is bound by residues C978, C981, C994, C997, C1002, C1005, C1024, and C1027.

Belongs to the lst-2 family.

Functionally, negative regulator of epidermal growth factor receptor (EGFR) signaling. The chain is Lateral signaling target protein 2 homolog from Drosophila virilis (Fruit fly).